Consider the following 207-residue polypeptide: Protein GET1 (207 aa).

Over 1–4 (MPSL) the chain is Lumenal. A helical membrane pass occupies residues 5 to 24 (LISVLFLHIAIYIINTIGAS). Residues 25–110 (TIDSLLWLIY…LFDVAVKALR (86 aa)) lie on the Cytoplasmic side of the membrane. A coiled-coil region spans residues 44-97 (MAREQHQMKLEVVQLKREMNATSSQDEFAKWAKLRRRHDKALEEYEVKNKQFSR). A helical membrane pass occupies residues 111-131 (WAGTSGLILLLQFWFSKTPIF). Residues 132–155 (TLPPSWIPWQVEWVLSFPRAPMGT) are Lumenal-facing. The helical transmembrane segment at 156–172 (VSIQVWGGACAVMVALV) threads the bilayer. Residues 173–207 (GEAIGATVRYLYGSKDSMEAIKVGAGAVEKEKKRQ) lie on the Cytoplasmic side of the membrane.

Belongs to the WRB/GET1 family. Interacts with GET3.

It localises to the endoplasmic reticulum membrane. Functionally, required for the post-translational delivery of tail-anchored (TA) proteins to the endoplasmic reticulum. Acts as a membrane receptor for soluble GET3, which recognizes and selectively binds the transmembrane domain of TA proteins in the cytosol. The protein is Protein GET1 of Paracoccidioides lutzii (strain ATCC MYA-826 / Pb01) (Paracoccidioides brasiliensis).